The following is a 209-amino-acid chain: Orotate phosphoribosyltransferase (209 aa).

5-phospho-alpha-D-ribose 1-diphosphate-binding positions include R96, K100, H102, and 122–130 (EDLISTGGS). Orotate is bound at residue S126.

The protein belongs to the purine/pyrimidine phosphoribosyltransferase family. PyrE subfamily. As to quaternary structure, homodimer. Requires Mg(2+) as cofactor.

It catalyses the reaction orotidine 5'-phosphate + diphosphate = orotate + 5-phospho-alpha-D-ribose 1-diphosphate. It functions in the pathway pyrimidine metabolism; UMP biosynthesis via de novo pathway; UMP from orotate: step 1/2. In terms of biological role, catalyzes the transfer of a ribosyl phosphate group from 5-phosphoribose 1-diphosphate to orotate, leading to the formation of orotidine monophosphate (OMP). This chain is Orotate phosphoribosyltransferase, found in Streptococcus sanguinis (strain SK36).